Reading from the N-terminus, the 348-residue chain is Histone PARylation factor 1 (348 aa).

The segment covering 1–10 (MAGRGKRKPR) has biased composition (basic residues). The segment at 1-38 (MAGRGKRKPRSLPQTETPNGEVKKAKEGLKDDKTSVGE) is disordered. Residues 21-38 (EVKKAKEGLKDDKTSVGE) are compositionally biased toward basic and acidic residues. Residues 170–200 (LQKKKKEKRQQKDDAALNRLEEDLKREAERL) adopt a coiled-coil conformation. Glutamate 285 (proton donor) is an active-site residue.

The protein belongs to the HPF1 family. In terms of assembly, interacts with PARP1 (via the PARP catalytic domain). Interacts with PARP2 (via the PARP catalytic domain). Interacts with core nucleosomes in a parp1- and parp2-dependent manner. As to expression, in adult, mainly expressed in gonads.

It localises to the chromosome. Its subcellular location is the nucleus. In terms of biological role, cofactor for serine ADP-ribosylation that confers serine specificity on parp1 and parp2 and plays a key role in DNA damage response. Initiates the repair of double-strand DNA breaks: recruited to DNA damage sites by parp1 and parp2 and switches the amino acid specificity of parp1 and parp2 from aspartate or glutamate to serine residues, licensing serine ADP-ribosylation of target proteins. Serine ADP-ribosylation of target proteins, such as histones, promotes decompaction of chromatin and the recruitment of repair factors leading to the reparation of DNA strand breaks. Serine ADP-ribosylation of proteins constitutes the primary form of ADP-ribosylation of proteins in response to DNA damage. Hpf1 acts by completing the active site of parp1 and parp2: forms a composite active site composed of residues from Hpf1 and parp1 or parp2. While hpf1 promotes the initiation of serine ADP-ribosylation, it restricts the polymerase activity of parp1 and parp2 in order to limit the length of poly-ADP-ribose chains. Hpf1 also promotes tyrosine ADP-ribosylation, probably by conferring tyrosine specificity on parp1. This chain is Histone PARylation factor 1, found in Danio rerio (Zebrafish).